A 336-amino-acid chain; its full sequence is Phospho-N-acetylmuramoyl-pentapeptide-transferase (336 aa).

10 helical membrane passes run 3 to 23, 53 to 73, 78 to 98, 118 to 138, 143 to 163, 174 to 194, 200 to 220, 226 to 246, 254 to 274, and 316 to 336; these read LTLI…PYFI, GGTV…LFSI, SLAL…IGFL, LALQ…PSGI, VFGY…FWVV, GIDG…GVIA, FDVL…FCFN, VFMG…ISIA, LIIG…VFYF, and AFLW…LYVF.

It belongs to the glycosyltransferase 4 family. MraY subfamily. The cofactor is Mg(2+).

It localises to the cell membrane. It catalyses the reaction UDP-N-acetyl-alpha-D-muramoyl-L-alanyl-gamma-D-glutamyl-L-lysyl-D-alanyl-D-alanine + di-trans,octa-cis-undecaprenyl phosphate = Mur2Ac(oyl-L-Ala-gamma-D-Glu-L-Lys-D-Ala-D-Ala)-di-trans,octa-cis-undecaprenyl diphosphate + UMP. It participates in cell wall biogenesis; peptidoglycan biosynthesis. In terms of biological role, catalyzes the initial step of the lipid cycle reactions in the biosynthesis of the cell wall peptidoglycan: transfers peptidoglycan precursor phospho-MurNAc-pentapeptide from UDP-MurNAc-pentapeptide onto the lipid carrier undecaprenyl phosphate, yielding undecaprenyl-pyrophosphoryl-MurNAc-pentapeptide, known as lipid I. The chain is Phospho-N-acetylmuramoyl-pentapeptide-transferase from Streptococcus pyogenes serotype M18 (strain MGAS8232).